A 234-amino-acid chain; its full sequence is LexA repressor (234 aa).

Residues 26 to 46 (FDEMKEALDLASKSGIHRLIT) constitute a DNA-binding region (H-T-H motif). The disordered stretch occupies residues 73 to 107 (ATAAAPPKGRGAFRPQVFEGGGAPPPAASPAAAAN). Residues S155 and K192 each act as for autocatalytic cleavage activity in the active site.

The protein belongs to the peptidase S24 family. As to quaternary structure, homodimer.

The catalysed reaction is Hydrolysis of Ala-|-Gly bond in repressor LexA.. In terms of biological role, represses a number of genes involved in the response to DNA damage (SOS response), including recA and lexA. In the presence of single-stranded DNA, RecA interacts with LexA causing an autocatalytic cleavage which disrupts the DNA-binding part of LexA, leading to derepression of the SOS regulon and eventually DNA repair. This chain is LexA repressor, found in Caulobacter vibrioides (strain ATCC 19089 / CIP 103742 / CB 15) (Caulobacter crescentus).